The primary structure comprises 927 residues: Protein translocase subunit SecA (927 aa).

ATP contacts are provided by residues Gln86, 104–108, and Asp494; that span reads GEGKT. The disordered stretch occupies residues 853–927; it reads YTAPDEDGTP…GSKAKRGKRR (75 aa). Residues 860–879 are compositionally biased toward basic and acidic residues; sequence GTPHAEVEAVDPGARERTSE. A compositionally biased stretch (basic residues) spans 907-927; sequence RAKRRGASARSGSKAKRGKRR.

It belongs to the SecA family. In terms of assembly, monomer and homodimer. Part of the essential Sec protein translocation apparatus which comprises SecA, SecYEG and auxiliary proteins SecDF. Other proteins may also be involved.

The protein resides in the cell membrane. The protein localises to the cytoplasm. It catalyses the reaction ATP + H2O + cellular proteinSide 1 = ADP + phosphate + cellular proteinSide 2.. Its function is as follows. Part of the Sec protein translocase complex. Interacts with the SecYEG preprotein conducting channel. Has a central role in coupling the hydrolysis of ATP to the transfer of proteins into and across the cell membrane, serving as an ATP-driven molecular motor driving the stepwise translocation of polypeptide chains across the membrane. The chain is Protein translocase subunit SecA from Kocuria rhizophila (strain ATCC 9341 / DSM 348 / NBRC 103217 / DC2201).